A 194-amino-acid polypeptide reads, in one-letter code: Pyridoxal 5'-phosphate synthase subunit PdxT (194 aa).

54–56 (GES) is an L-glutamine binding site. Cysteine 83 serves as the catalytic Nucleophile. L-glutamine contacts are provided by residues arginine 110 and 139–140 (IR). Catalysis depends on charge relay system residues histidine 175 and glutamate 177.

The protein belongs to the glutaminase PdxT/SNO family. In the presence of PdxS, forms a dodecamer of heterodimers. Only shows activity in the heterodimer.

The catalysed reaction is aldehydo-D-ribose 5-phosphate + D-glyceraldehyde 3-phosphate + L-glutamine = pyridoxal 5'-phosphate + L-glutamate + phosphate + 3 H2O + H(+). It carries out the reaction L-glutamine + H2O = L-glutamate + NH4(+). It participates in cofactor biosynthesis; pyridoxal 5'-phosphate biosynthesis. In terms of biological role, catalyzes the hydrolysis of glutamine to glutamate and ammonia as part of the biosynthesis of pyridoxal 5'-phosphate. The resulting ammonia molecule is channeled to the active site of PdxS. This chain is Pyridoxal 5'-phosphate synthase subunit PdxT, found in Methanoregula boonei (strain DSM 21154 / JCM 14090 / 6A8).